The sequence spans 570 residues: Periplasmic trehalase (570 aa).

Residues 1–34 form the signal peptide; sequence MIPPEIRRSVLLQKAIKLALAGTLLTFASFSATA. Substrate-binding positions include R159, 166 to 167, N203, 212 to 214, 284 to 286, and G317; these read WD, RSQ, and RPE. Residues D319 and E503 each act as proton donor/acceptor in the active site. E518 is a binding site for substrate. The interval 544–570 is disordered; that stretch reads KPCDSVPSTRPASLSATPTKTPSAATQ. Low complexity predominate over residues 554–570; the sequence is PASLSATPTKTPSAATQ.

This sequence belongs to the glycosyl hydrolase 37 family. As to quaternary structure, monomer.

It is found in the periplasm. It carries out the reaction alpha,alpha-trehalose + H2O = alpha-D-glucose + beta-D-glucose. In terms of biological role, provides the cells with the ability to utilize trehalose at high osmolarity by splitting it into glucose molecules that can subsequently be taken up by the phosphotransferase-mediated uptake system. In Salmonella paratyphi A (strain AKU_12601), this protein is Periplasmic trehalase.